Reading from the N-terminus, the 671-residue chain is DNA ligase (671 aa).

Residues 31 to 35 (DAEYD), 80 to 81 (SL), and glutamate 110 contribute to the NAD(+) site. The active-site N6-AMP-lysine intermediate is lysine 112. The NAD(+) site is built by arginine 133, glutamate 167, lysine 283, and lysine 307. Residues cysteine 401, cysteine 404, cysteine 419, and cysteine 424 each contribute to the Zn(2+) site. The 85-residue stretch at 587–671 (EEELVFAGKT…YLPDEGGLNE (85 aa)) folds into the BRCT domain.

It belongs to the NAD-dependent DNA ligase family. LigA subfamily. It depends on Mg(2+) as a cofactor. Mn(2+) is required as a cofactor.

The catalysed reaction is NAD(+) + (deoxyribonucleotide)n-3'-hydroxyl + 5'-phospho-(deoxyribonucleotide)m = (deoxyribonucleotide)n+m + AMP + beta-nicotinamide D-nucleotide.. In terms of biological role, DNA ligase that catalyzes the formation of phosphodiester linkages between 5'-phosphoryl and 3'-hydroxyl groups in double-stranded DNA using NAD as a coenzyme and as the energy source for the reaction. It is essential for DNA replication and repair of damaged DNA. The polypeptide is DNA ligase (Listeria monocytogenes serotype 4b (strain CLIP80459)).